Reading from the N-terminus, the 246-residue chain is Ribonuclease PH (246 aa).

Residues R86 and 124–126 each bind phosphate; that span reads GTR.

This sequence belongs to the RNase PH family. As to quaternary structure, homohexameric ring arranged as a trimer of dimers.

The enzyme catalyses tRNA(n+1) + phosphate = tRNA(n) + a ribonucleoside 5'-diphosphate. In terms of biological role, phosphorolytic 3'-5' exoribonuclease that plays an important role in tRNA 3'-end maturation. Removes nucleotide residues following the 3'-CCA terminus of tRNAs; can also add nucleotides to the ends of RNA molecules by using nucleoside diphosphates as substrates, but this may not be physiologically important. Probably plays a role in initiation of 16S rRNA degradation (leading to ribosome degradation) during starvation. In Bacillus licheniformis (strain ATCC 14580 / DSM 13 / JCM 2505 / CCUG 7422 / NBRC 12200 / NCIMB 9375 / NCTC 10341 / NRRL NRS-1264 / Gibson 46), this protein is Ribonuclease PH.